We begin with the raw amino-acid sequence, 190 residues long: Holliday junction branch migration complex subunit RuvA (190 aa).

Residues 1-64 (MIGRITGTLI…EDAQLLYGFG (64 aa)) are domain I. The tract at residues 65-137 (SSAERSTFRE…MRGKLGADIG (73 aa)) is domain II. The tract at residues 137-141 (GATPH) is flexible linker. A domain III region spans residues 142-190 (AAGGHQSDILNALLALGYSDKESQAALKKLPEGVDVSEGIRLALKALVR).

This sequence belongs to the RuvA family. As to quaternary structure, homotetramer. Forms an RuvA(8)-RuvB(12)-Holliday junction (HJ) complex. HJ DNA is sandwiched between 2 RuvA tetramers; dsDNA enters through RuvA and exits via RuvB. An RuvB hexamer assembles on each DNA strand where it exits the tetramer. Each RuvB hexamer is contacted by two RuvA subunits (via domain III) on 2 adjacent RuvB subunits; this complex drives branch migration. In the full resolvosome a probable DNA-RuvA(4)-RuvB(12)-RuvC(2) complex forms which resolves the HJ.

Its subcellular location is the cytoplasm. In terms of biological role, the RuvA-RuvB-RuvC complex processes Holliday junction (HJ) DNA during genetic recombination and DNA repair, while the RuvA-RuvB complex plays an important role in the rescue of blocked DNA replication forks via replication fork reversal (RFR). RuvA specifically binds to HJ cruciform DNA, conferring on it an open structure. The RuvB hexamer acts as an ATP-dependent pump, pulling dsDNA into and through the RuvAB complex. HJ branch migration allows RuvC to scan DNA until it finds its consensus sequence, where it cleaves and resolves the cruciform DNA. The sequence is that of Holliday junction branch migration complex subunit RuvA from Bordetella parapertussis (strain 12822 / ATCC BAA-587 / NCTC 13253).